The primary structure comprises 317 residues: 8-oxo-(d)GTP phosphatase (317 aa).

One can recognise a Nudix hydrolase domain in the interval 15–148 (RIVYAAGAVL…DRKVLCRFAK (134 aa)). Residues 43–46 (RPRY), D48, and 53–55 (KGK) each bind substrate. Residues K53, E69, and E73 each coordinate Mg(2+). Positions 54 to 75 (GKVDPGETAPVGAVREILEETG) match the Nudix box motif. 4 residues coordinate substrate: Y89, K99, E118, and Y136. Residue E118 coordinates Mg(2+).

It belongs to the Nudix hydrolase family. Mg(2+) serves as cofactor.

The catalysed reaction is 8-oxo-dGTP + H2O = 8-oxo-dGDP + phosphate + H(+). It carries out the reaction 8-oxo-GTP + H2O = 8-oxo-GDP + phosphate + H(+). Catalyzes the conversion of 8-oxo-dGTP to 8-oxo-dGDP, and 8-oxo-GTP to 8-oxo-GDP. This is 8-oxo-(d)GTP phosphatase from Mycobacterium tuberculosis (strain CDC 1551 / Oshkosh).